The following is a 202-amino-acid chain: CASP-like protein 2B1 (202 aa).

The Cytoplasmic segment spans residues 1-29 (MSYLGVGVSPGNVPVYHGSNLKVIDKRVR). The chain crosses the membrane as a helical span at residues 30 to 50 (LAELVLRCLICGLGVLAAVLV). The Extracellular segment spans residues 51–72 (GTDTQVKEIFSIQKKARFTDMK). The helical transmembrane segment at 73-93 (ALVFLVIANGIAAAYSLLQGV) threads the bilayer. Topologically, residues 94-109 (RCVVGMVRGSALFSKP) are cytoplasmic. Residues 110–130 (LAWAIFSGDQMMAYLTVAAVA) form a helical membrane-spanning segment. Topologically, residues 131 to 164 (AAAQSAVFAKLGQPELQWMKICNMYGKFCNQVGE) are extracellular. The helical transmembrane segment at 165-185 (GIASALLVSVSMVVLSCISAF) threads the bilayer. At 186-202 (SLFRLYGANKGKDCTRW) the chain is on the cytoplasmic side.

The protein belongs to the Casparian strip membrane proteins (CASP) family. In terms of assembly, homodimer and heterodimers.

The protein resides in the cell membrane. This Ricinus communis (Castor bean) protein is CASP-like protein 2B1.